The sequence spans 172 residues: Nicotinamide-nucleotide adenylyltransferase (172 aa).

This sequence belongs to the archaeal NMN adenylyltransferase family.

It localises to the cytoplasm. The catalysed reaction is beta-nicotinamide D-ribonucleotide + ATP + H(+) = diphosphate + NAD(+). Its pathway is cofactor biosynthesis; NAD(+) biosynthesis; NAD(+) from nicotinamide D-ribonucleotide: step 1/1. The polypeptide is Nicotinamide-nucleotide adenylyltransferase (Sulfurisphaera tokodaii (strain DSM 16993 / JCM 10545 / NBRC 100140 / 7) (Sulfolobus tokodaii)).